The chain runs to 66 residues: Large ribosomal subunit protein bL31 (66 aa).

Residues C16, C18, C36, and C39 each contribute to the Zn(2+) site.

The protein belongs to the bacterial ribosomal protein bL31 family. Type A subfamily. Part of the 50S ribosomal subunit. It depends on Zn(2+) as a cofactor.

Binds the 23S rRNA. The protein is Large ribosomal subunit protein bL31 of Campylobacter hominis (strain ATCC BAA-381 / DSM 21671 / CCUG 45161 / LMG 19568 / NCTC 13146 / CH001A).